The chain runs to 30 residues: Hainantoxin F6-34.84 (30 aa).

2 disulfide bridges follow: Cys2-Cys15 and Cys9-Cys24.

Belongs to the AVIT (prokineticin) family. As to expression, expressed by the venom gland.

The protein resides in the secreted. This Cyriopagopus hainanus (Chinese bird spider) protein is Hainantoxin F6-34.84.